Here is a 232-residue protein sequence, read N- to C-terminus: 2,3,4,5-tetrahydropyridine-2,6-dicarboxylate N-acetyltransferase (232 aa).

Belongs to the transferase hexapeptide repeat family. DapH subfamily.

The catalysed reaction is (S)-2,3,4,5-tetrahydrodipicolinate + acetyl-CoA + H2O = L-2-acetamido-6-oxoheptanedioate + CoA. It participates in amino-acid biosynthesis; L-lysine biosynthesis via DAP pathway; LL-2,6-diaminopimelate from (S)-tetrahydrodipicolinate (acetylase route): step 1/3. Catalyzes the transfer of an acetyl group from acetyl-CoA to tetrahydrodipicolinate. The sequence is that of 2,3,4,5-tetrahydropyridine-2,6-dicarboxylate N-acetyltransferase from Streptococcus sanguinis (strain SK36).